The chain runs to 430 residues: Cytochrome c biogenesis protein CcsB (430 aa).

Helical transmembrane passes span 14–34, 72–92, and 162–182; these read LRLAIALLLLIAAASAVGTIL, SVWFLALLAWLGLALMLCSWR, and VGPLLVHTGLVLLLIGAAWGA.

This sequence belongs to the Ccs1/CcsB family. In terms of assembly, may interact with CcsA.

Its subcellular location is the cellular thylakoid membrane. Functionally, required during biogenesis of c-type cytochromes (cytochrome c6 and cytochrome f) at the step of heme attachment. In Synechococcus sp. (strain WH7803), this protein is Cytochrome c biogenesis protein CcsB.